The following is a 352-amino-acid chain: Quinolinate synthase (352 aa).

Residues histidine 48 and serine 69 each coordinate iminosuccinate. Position 114 (cysteine 114) interacts with [4Fe-4S] cluster. Residues 140–142 (YAN) and serine 157 contribute to the iminosuccinate site. Cysteine 201 serves as a coordination point for [4Fe-4S] cluster. Iminosuccinate contacts are provided by residues 227-229 (HPE) and threonine 244. [4Fe-4S] cluster is bound at residue cysteine 298.

This sequence belongs to the quinolinate synthase family. Type 1 subfamily. Requires [4Fe-4S] cluster as cofactor.

It localises to the cytoplasm. The catalysed reaction is iminosuccinate + dihydroxyacetone phosphate = quinolinate + phosphate + 2 H2O + H(+). The protein operates within cofactor biosynthesis; NAD(+) biosynthesis; quinolinate from iminoaspartate: step 1/1. Its function is as follows. Catalyzes the condensation of iminoaspartate with dihydroxyacetone phosphate to form quinolinate. The polypeptide is Quinolinate synthase (Pseudomonas fluorescens (strain Pf0-1)).